A 152-amino-acid polypeptide reads, in one-letter code: 3-hydroxyacyl-[acyl-carrier-protein] dehydratase FabZ (152 aa).

His-58 is an active-site residue.

The protein belongs to the thioester dehydratase family. FabZ subfamily.

The protein localises to the cytoplasm. It carries out the reaction a (3R)-hydroxyacyl-[ACP] = a (2E)-enoyl-[ACP] + H2O. In terms of biological role, involved in unsaturated fatty acids biosynthesis. Catalyzes the dehydration of short chain beta-hydroxyacyl-ACPs and long chain saturated and unsaturated beta-hydroxyacyl-ACPs. This is 3-hydroxyacyl-[acyl-carrier-protein] dehydratase FabZ from Synechococcus sp. (strain RCC307).